Consider the following 691-residue polypeptide: Beta-galactosidase III (691 aa).

Substrate contacts are provided by Arg-121 and Asn-159. The active-site Proton donor is the Glu-160. The active-site Nucleophile is Glu-318. Substrate-binding positions include Trp-326 and 366–369 (EKWH).

This sequence belongs to the glycosyl hydrolase 42 family.

The catalysed reaction is Hydrolysis of terminal non-reducing beta-D-galactose residues in beta-D-galactosides.. Specific for beta-D-anomer-linked galactoside substrates. Hydrolyzes o-nitrophenyl-beta-D-galactopyranoside (ONPG), chromogen 5-bromo-4-chloro-3-indolyl-beta-D-galactopyranoside (X-gal) and to a lesser extent lactose. Hydrolyzes p-nitrophenyl-beta-D-galacturonide very slightly. Does not hydrolyze maltose, sucrose, raffinose or melibiose. Has some transgalactosylation activity yielding galacto-oligosaccharides (GaOS), including O-beta-D-galactopyranosyl-(1,3)-O-beta-D-galactopyranosyl-(1-4)-D-glucopyranose. The chain is Beta-galactosidase III from Bifidobacterium longum subsp. infantis.